The sequence spans 180 residues: tRNA (cytidine(56)-2'-O)-methyltransferase (180 aa).

S-adenosyl-L-methionine-binding positions include Leu-84 and 112 to 116 (GAEKV).

Belongs to the aTrm56 family. As to quaternary structure, homodimer.

Its subcellular location is the cytoplasm. The enzyme catalyses cytidine(56) in tRNA + S-adenosyl-L-methionine = 2'-O-methylcytidine(56) in tRNA + S-adenosyl-L-homocysteine + H(+). Specifically catalyzes the AdoMet-dependent 2'-O-ribose methylation of cytidine at position 56 in tRNAs. This chain is tRNA (cytidine(56)-2'-O)-methyltransferase, found in Haloarcula marismortui (strain ATCC 43049 / DSM 3752 / JCM 8966 / VKM B-1809) (Halobacterium marismortui).